Here is a 767-residue protein sequence, read N- to C-terminus: GPI ethanolamine phosphate transferase 2 (767 aa).

Residues asparagine 186 and asparagine 401 are each glycosylated (N-linked (GlcNAc...) asparagine). The next 2 membrane-spanning stretches (helical) occupy residues 407–427 (LGLF…YGLG) and 434–454 (VTFL…SSYV). The N-linked (GlcNAc...) asparagine glycan is linked to asparagine 490. 3 helical membrane passes run 513-533 (ILWA…CLNS), 538-558 (IWRS…LVFV), and 595-615 (IPIF…KMSA). Asparagine 627 carries N-linked (GlcNAc...) asparagine glycosylation. 3 helical membrane passes run 655-675 (SVVL…IWWA), 695-715 (TLLT…CTML), and 733-755 (LAWT…SQVL).

Belongs to the PIGG/PIGN/PIGO family. PIGG subfamily.

The protein resides in the endoplasmic reticulum membrane. The protein operates within glycolipid biosynthesis; glycosylphosphatidylinositol-anchor biosynthesis. Its function is as follows. Ethanolamine phosphate transferase involved in glycosylphosphatidylinositol-anchor biosynthesis. Transfers ethanolamine phosphate to the GPI second mannose. This Aspergillus fumigatus (strain ATCC MYA-4609 / CBS 101355 / FGSC A1100 / Af293) (Neosartorya fumigata) protein is GPI ethanolamine phosphate transferase 2 (las21).